The chain runs to 350 residues: tRNA N6-adenosine threonylcarbamoyltransferase (350 aa).

The Fe cation site is built by H117 and H121. Substrate-binding positions include 140–144 (LVSGG), D173, G186, and N277. Position 305 (D305) interacts with Fe cation.

The protein belongs to the KAE1 / TsaD family. Fe(2+) is required as a cofactor.

It localises to the cytoplasm. The catalysed reaction is L-threonylcarbamoyladenylate + adenosine(37) in tRNA = N(6)-L-threonylcarbamoyladenosine(37) in tRNA + AMP + H(+). Required for the formation of a threonylcarbamoyl group on adenosine at position 37 (t(6)A37) in tRNAs that read codons beginning with adenine. Is involved in the transfer of the threonylcarbamoyl moiety of threonylcarbamoyl-AMP (TC-AMP) to the N6 group of A37, together with TsaE and TsaB. TsaD likely plays a direct catalytic role in this reaction. In Novosphingobium aromaticivorans (strain ATCC 700278 / DSM 12444 / CCUG 56034 / CIP 105152 / NBRC 16084 / F199), this protein is tRNA N6-adenosine threonylcarbamoyltransferase.